We begin with the raw amino-acid sequence, 521 residues long: MSHQKILILDFGSQVSQLIARRVREQHVYCELHPYDVSEAFIRDFKPQGIILSGGPNSVYEAVDWRAPQVVFELGVPVLGICYGMQTMAEQLGGKVESSAKREFGYAELRARGHSKLFQGIEDRTNAEGHGLLDVWMSHGDKVTELPAGFKVIGSNESCPVAAMADEERGFYGVQFHPEVTHTIKGKEMLARFVHEICGCGNDWNMPDYISEAVEKIRAQVGDEEVILGLSGGVDSSVAAALIHRAIGDQLTCVFVDNGLLRLNEGAQVMETFNRSLGVKVIHVDATEQFMGHLKGVSDPEQKRKIIGREFVEVFQAEAAKLPKARWLAQGTIYPDVIESAGAKTGKAHAIKSHHNVGGLPETLNLKLLEPLRDLFKDEVRELGVALGLPHDMVYRHPFPGPGLGVRILGEVKKEFADLLRRADAIFIDELRAADWYDKTSQAFAVFLPVKSVGVMGDGRTYEYVVALRAVQTQDFMTAHWAELPHSLLGKVSNRIINEVRGINRVVYDISGKPPATIEWE.

Residues 5–203 (KILILDFGSQ…VHEICGCGND (199 aa)) form the Glutamine amidotransferase type-1 domain. Cysteine 82 serves as the catalytic Nucleophile. Catalysis depends on residues histidine 177 and glutamate 179. Residues 204–396 (WNMPDYISEA…LGLPHDMVYR (193 aa)) enclose the GMPS ATP-PPase domain. ATP is bound at residue 231 to 237 (SGGVDSS).

In terms of assembly, homodimer.

The enzyme catalyses XMP + L-glutamine + ATP + H2O = GMP + L-glutamate + AMP + diphosphate + 2 H(+). The protein operates within purine metabolism; GMP biosynthesis; GMP from XMP (L-Gln route): step 1/1. In terms of biological role, catalyzes the synthesis of GMP from XMP. This chain is GMP synthase [glutamine-hydrolyzing], found in Azoarcus sp. (strain BH72).